The primary structure comprises 840 residues: V-type proton ATPase subunit a, vacuolar isoform (840 aa).

Ala2 carries the post-translational modification N-acetylalanine. The Cytoplasmic segment spans residues 2 to 404 (AEKEEAIFRS…DCYGIAQYRE (403 aa)). Positions 117–145 (LEERLIQMEDATDQIEVQKNDLEQYRFIL) form a coiled coil. Residues 405–423 (INAGLPTIVTFPFMFAIMF) form a helical membrane-spanning segment. The Vacuolar portion of the chain corresponds to 424–425 (GD). The helical transmembrane segment at 426-442 (MGHGFLMTLAALSLVLN) threads the bilayer. The Cytoplasmic segment spans residues 443–456 (EKKINKMKRGEIFD). Residues 457-486 (MAFTGRYIILLMGVFSMYTGFLYNDIFSKT) form a helical membrane-spanning segment. Topologically, residues 487–534 (MTIFKSGWKWPDHWKKGESITATSVGTYPIGLDWAWHGTENALLFSNS) are vacuolar. The helical transmembrane segment at 535-554 (YKMKLSILMGFIHMTYSYFF) threads the bilayer. Residues 555-572 (SLANHLYFNSMIDIIGNF) lie on the Cytoplasmic side of the membrane. Residues 573 to 593 (IPGLLFMQGIFGYLSVCIVYK) traverse the membrane as a helical segment. The Vacuolar segment spans residues 594 to 636 (WAVDWVKDGKPAPGLLNMLINMFLSPGTIDDELYPHQAKVQVF). The chain crosses the membrane as a helical span at residues 637–656 (LLLMALVCIPWLLLVKPLHF). Residues 657–719 (KFTHKKKSHE…DIMIHQVIHT (63 aa)) lie on the Cytoplasmic side of the membrane. Residues 720 to 744 (IEFCLNCVSHTASYLRLWALSLAHA) traverse the membrane as a helical segment. The Vacuolar segment spans residues 745 to 765 (QLSSVLWTMTIQIAFGFRGFV). The chain crosses the membrane as a helical span at residues 766–804 (GVFMTVALFAMWFALTCAVLVLMEGTSAMLHSLRLHWVE). The Cytoplasmic segment spans residues 805-840 (SMSKFFVGEGLPYEPFAFEYKDMEVAVASASSSASS).

Belongs to the V-ATPase 116 kDa subunit family. As to quaternary structure, V-ATPase is a heteromultimeric enzyme composed of a peripheral catalytic V1 complex (components A to H) attached to an integral membrane V0 proton pore complex (components: a, c, c', c'', d, e, f and VOA1). In terms of processing, glycosylated.

The protein localises to the vacuole membrane. In terms of biological role, subunit of the V0 complex of vacuolar(H+)-ATPase (V-ATPase), a multisubunit enzyme composed of a peripheral complex (V1) that hydrolyzes ATP and a membrane integral complex (V0) that translocates protons. V-ATPase is responsible for acidifying and maintaining the pH of intracellular compartments. Is present only in vacuolar V-ATPase complexes; enzymes containing this subunit have a 4-fold higher ratio of proton transport to ATP hydrolysis than complexes containing the Golgi/endosomal isoform and undergo reversible dissociation of V1 and V0 in response to glucose depletion. The sequence is that of V-type proton ATPase subunit a, vacuolar isoform from Saccharomyces cerevisiae (strain ATCC 204508 / S288c) (Baker's yeast).